A 750-amino-acid chain; its full sequence is Photosystem I P700 chlorophyll a apoprotein A1 (750 aa).

Helical transmembrane passes span 70 to 93 (VFSA…FHGA), 156 to 179 (LYTT…FHYH), 195 to 219 (LNHH…HVSL), 291 to 309 (TAHH…GHMY), 346 to 369 (WHAQ…HHMY), 385 to 411 (LSLF…IFMV), 433 to 455 (AIIS…LYIH), and 531 to 549 (FLVH…LILL). Residues Cys573 and Cys582 each coordinate [4Fe-4S] cluster. 2 helical membrane passes run 589–610 (HVFL…HFSW) and 664–686 (LSAY…MFLF). His675 is a chlorophyll a' binding site. Met683 and Tyr691 together coordinate chlorophyll a. Position 692 (Trp692) interacts with phylloquinone. The helical transmembrane segment at 724–744 (AVGVAHYLLGGIATTWAFFLA) threads the bilayer.

Belongs to the PsaA/PsaB family. The PsaA/B heterodimer binds the P700 chlorophyll special pair and subsequent electron acceptors. PSI consists of a core antenna complex that captures photons, and an electron transfer chain that converts photonic excitation into a charge separation. The eukaryotic PSI reaction center is composed of at least 11 subunits. Requires P700 is a chlorophyll a/chlorophyll a' dimer, A0 is one or more chlorophyll a, A1 is one or both phylloquinones and FX is a shared 4Fe-4S iron-sulfur center. as cofactor.

It localises to the plastid. The protein localises to the chloroplast thylakoid membrane. The catalysed reaction is reduced [plastocyanin] + hnu + oxidized [2Fe-2S]-[ferredoxin] = oxidized [plastocyanin] + reduced [2Fe-2S]-[ferredoxin]. PsaA and PsaB bind P700, the primary electron donor of photosystem I (PSI), as well as the electron acceptors A0, A1 and FX. PSI is a plastocyanin-ferredoxin oxidoreductase, converting photonic excitation into a charge separation, which transfers an electron from the donor P700 chlorophyll pair to the spectroscopically characterized acceptors A0, A1, FX, FA and FB in turn. Oxidized P700 is reduced on the lumenal side of the thylakoid membrane by plastocyanin. In Physcomitrium patens (Spreading-leaved earth moss), this protein is Photosystem I P700 chlorophyll a apoprotein A1.